A 319-amino-acid chain; its full sequence is Acetyl-coenzyme A carboxylase carboxyl transferase subunit alpha (319 aa).

The region spanning 39–293 (RLQKKSNDLT…KAVLEKQLHE (255 aa)) is the CoA carboxyltransferase C-terminal domain.

The protein belongs to the AccA family. As to quaternary structure, acetyl-CoA carboxylase is a heterohexamer composed of biotin carboxyl carrier protein (AccB), biotin carboxylase (AccC) and two subunits each of ACCase subunit alpha (AccA) and ACCase subunit beta (AccD).

It is found in the cytoplasm. It carries out the reaction N(6)-carboxybiotinyl-L-lysyl-[protein] + acetyl-CoA = N(6)-biotinyl-L-lysyl-[protein] + malonyl-CoA. Its pathway is lipid metabolism; malonyl-CoA biosynthesis; malonyl-CoA from acetyl-CoA: step 1/1. Component of the acetyl coenzyme A carboxylase (ACC) complex. First, biotin carboxylase catalyzes the carboxylation of biotin on its carrier protein (BCCP) and then the CO(2) group is transferred by the carboxyltransferase to acetyl-CoA to form malonyl-CoA. The chain is Acetyl-coenzyme A carboxylase carboxyl transferase subunit alpha from Neisseria meningitidis serogroup C / serotype 2a (strain ATCC 700532 / DSM 15464 / FAM18).